The chain runs to 20 residues: Ranalexin-1Cb (20 aa).

The cysteines at positions 14 and 20 are disulfide-linked.

As to expression, expressed by the skin glands.

The protein localises to the secreted. Antibacterial activity against Gram-positive bacterium S.aureus and Gram-negative bacterium E.coli. Has activity against C.albicans. The protein is Ranalexin-1Cb of Lithobates clamitans (Green frog).